The chain runs to 138 residues: Protein FAM136A (138 aa).

A2 is subject to N-acetylalanine. 2 positions are modified to phosphothreonine: T124 and T126.

Belongs to the FAM136 family.

In Bos taurus (Bovine), this protein is Protein FAM136A (FAM136A).